The following is an 887-amino-acid chain: Valine--tRNA ligase (887 aa).

Residues P47–H57 carry the 'HIGH' region motif. The short motif at K527–S531 is the 'KMSKS' region element. Residue K530 participates in ATP binding. Residues L817 to K885 are a coiled coil.

The protein belongs to the class-I aminoacyl-tRNA synthetase family. ValS type 1 subfamily. Monomer.

It localises to the cytoplasm. The catalysed reaction is tRNA(Val) + L-valine + ATP = L-valyl-tRNA(Val) + AMP + diphosphate. Its function is as follows. Catalyzes the attachment of valine to tRNA(Val). As ValRS can inadvertently accommodate and process structurally similar amino acids such as threonine, to avoid such errors, it has a 'posttransfer' editing activity that hydrolyzes mischarged Thr-tRNA(Val) in a tRNA-dependent manner. The chain is Valine--tRNA ligase from Geobacter sulfurreducens (strain ATCC 51573 / DSM 12127 / PCA).